We begin with the raw amino-acid sequence, 147 residues long: TRAP-T-associated universal stress protein TeaD (147 aa).

Residues 8-10, V38, 117-122, and 131-133 contribute to the ATP site; these read PVD, GAQGTN, and SVA.

It belongs to the universal stress protein A family. In terms of assembly, homodimer or homotetramer; in equilibrium. The dimer/tetramer ratio is ATP-dependent. ATP stabilizes dimer-dimer complexes, with one ATP molecule bound to each monomer.

The protein resides in the cytoplasm. ATP-binding protein that negatively regulates activity of the tripartite ATP-independent periplasmic (TRAP) ectoine transport system TeaABC. May regulate uptake according to the ATP status of the cell. The polypeptide is TRAP-T-associated universal stress protein TeaD (teaD) (Halomonas elongata (strain ATCC 33173 / DSM 2581 / NBRC 15536 / NCIMB 2198 / 1H9)).